We begin with the raw amino-acid sequence, 1805 residues long: MSDTKVKVAVRVRPMNRRELELNTKCVVEMEGNQTVLHPPPSNTKQGERKPPKVFAFDYCFWSMDESNTTKYAGQEVVFKCLGEGILEKAFQGYNACIFAYGQTGSGKSFSMMGHAEQLGLIPRLCCALFKRISLEQNESQTFKVEVSYMEIYNEKVRDLLDPKGSRQSLKVREHKVLGPYVDGLSQLAVTSFEDIESLMSEGNKSRTVAATNMNEESSRSHAVFNIIITQTLYDLQSGNSGEKVSKVSLVDLAGSERVSKTGAAGERLKEGSNINKSLTTLGLVISSLADQAAGKGKSKFVPYRDSVLTWLLKDNLGGNSQTSMIATISPAADNYEETLSTLRYADRAKRIVNHAVVNEDPNAKVIRELREEVEKLREQLSQAEAMKAPELKEKLEESEKLIKELTVTWEEKLRKTEEIAQERQRQLESMGISLEMSGIKVGDDKCYLVNLNADPALNELLVYYLKDHTRVGADTSQDIQLFGIGIQPQHCEIDIASDGDVTLTPKENARSCVNGTLVCSTTQLWHGDRILWGNNHFFRINLPKRKRRDWLKDFEKETGPPEHDLDAASEASSEPDYNYEFAQMEVIMKTLNSNDPVQNVVQVLEKQYLEEKRSALEEQRLMYERELEQLRQQLSPDRQPQSSGPDRLAYSSQTAQQKVTQWAEERDELFRQSLAKLREQLVKANTLVREANFLAEEMSKLTDYQVTLQIPAANLSANRKRGAIVSEPAIQVRRKGKSTQVWTIEKLENKLIDMRDLYQEWKEKVPEAKRLYGKRGDPFYEAQENHNLIGVANVFLECLFCDVKLQYAVPIISQQGEVAGRLHVEVMRVTGAVPERVVEDDSSENSSESGSLEVVDSSGEIIHRVKKLTCRVKIKEATGLPLNLSNFVFCQYTFWDQCESTVAAPVVDPEVPSPQSKDAQYTVTFSHCKDYVVNVTEEFLEFISDGALAIEVWGHRCAGNGSSIWEVDSLHAKTRTLHDRWNEVTRRIEMWISILELNELGEYAAVELHQAKDVNTGGIFQLRQGHSRRVQVTVKPVQHSGTLPLMVEAILSVSIGCVTARSTKLQRGLDSYQRDDEDGDDMDSYQEEDLNCVRERWSDALIKRREYLDEQIKKVSNKTEKTEDDVEREAQLVEQWVGLTEERNAVLVPAPGSGIPGAPADWIPPPGMETHIPVLFLDLNADDLSANEQLVGPHASGVNSILPKEHGSQFFYLPIIKHSDDEVSATASWDSSVHDSVHLNRVTPQNERIYLIVKTTVQLSHPAAMELVLRKRIAANIYNKQSFTQSLKRRISLKNIFYSCGVTYEIVSNIPKATEEIEDRETLALLAARSENEGTSDGETYIEKYTRGVLQVENILSLERLRQAVTVKEALSTKARHIRRSLSTPNVHNVSSSRPDLSGFDEDDKGWPENQLDMSDYSSSYQDVACYGTLPRDSPRRNKEGCTSETPHALTVSPFKAFSPQPPKFFKPLMPVKEEHKKRIALEARPLLSQESMPPPQAHNPGCIVPSGSNGSSMPVEHNSKREKKIDSEEEENELEAINRKLISSQPYVPVEFADFSVYNASLENREWFSSKVDLSNSRVLEKEVSRSPTTSSITSGYFSHSASNATLSDMVVPSSDSSDQLAIQTKDADSTEHSTPSLVHDFRPSSNKELTEVEKGLVKDKIIVVPLKENSALAKGSPSSQSIPEKNSKSLCRTGSCSELDACPSKISQPARGFCPREVTVEHTTNILEDHSFTEFMGVSEGKDFDGLTDSSAGELSSRRSLPNKTGGKTVSDGLHHPSQLHSKLENDQVIIPEAAFWVLCCQ.

The region spanning 5-352 (KVKVAVRVRP…LRYADRAKRI (348 aa)) is the Kinesin motor domain. Position 102–109 (102–109 (GQTGSGKS)) interacts with ATP. Residues 359–436 (NEDPNAKVIR…QLESMGISLE (78 aa)) adopt a coiled-coil conformation. The 51-residue stretch at 469 to 519 (HTRVGADTSQDIQLFGIGIQPQHCEIDIASDGDVTLTPKENARSCVNGTLV) folds into the FHA domain. The span at 556–567 (EKETGPPEHDLD) shows a compositional bias: basic and acidic residues. 2 disordered regions span residues 556–575 (EKETGPPEHDLDAASEASSE) and 633–656 (QQLSPDRQPQSSGPDRLAYSSQTA). Coiled-coil stretches lie at residues 602–775 (VQVL…LYGK) and 1100–1138 (DALIKRREYLDEQIKKVSNKTEKTEDDVEREAQLVEQWV). Residue Ser-636 is modified to Phosphoserine. Phosphoserine is present on Ser-1287. Positions 1385–1396 (TPNVHNVSSSRP) are enriched in polar residues. The disordered stretch occupies residues 1385–1404 (TPNVHNVSSSRPDLSGFDED). Phosphoserine is present on residues Ser-1454, Ile-1481, Ser-1490, and Met-1494. The disordered stretch occupies residues 1507-1531 (PSGSNGSSMPVEHNSKREKKIDSEE). The stretch at 1518-1547 (EHNSKREKKIDSEEEENELEAINRKLISSQ) forms a coiled coil. Positions 1519 to 1528 (HNSKREKKID) are enriched in basic and acidic residues. Residues Ser-1529 and Ser-1572 each carry the phosphoserine modification. Positions 1612–1621 (MVVPSSDSSD) are enriched in low complexity. A disordered region spans residues 1612–1645 (MVVPSSDSSDQLAIQTKDADSTEHSTPSLVHDFR). Phosphoserine is present on residues Ser-1648 and Ser-1698. The disordered stretch occupies residues 1749–1779 (GLTDSSAGELSSRRSLPNKTGGKTVSDGLHH). Residues 1751–1771 (TDSSAGELSSRRSLPNKTGGK) are compositionally biased toward polar residues.

Belongs to the TRAFAC class myosin-kinesin ATPase superfamily. Kinesin family. Interacts with AP2B1. Interacts with ZFYVE26. Interacts with AP1G1 and AP1G2. As to expression, widely expressed, with highest levels in heart, brain and skeletal muscle.

The protein localises to the cytoplasm. Its subcellular location is the cytoskeleton. It localises to the microtubule organizing center. It is found in the centrosome. The protein resides in the midbody. The protein localises to the endosome membrane. Its subcellular location is the golgi apparatus membrane. Plus end-directed microtubule-dependent motor protein involved in intracellular transport and regulating various processes such as mannose-6-phosphate receptor (M6PR) transport to the plasma membrane, endosomal sorting during melanosome biogenesis and cytokinesis. Mediates the transport of M6PR-containing vesicles from trans-Golgi network to the plasma membrane via direct interaction with the AP-1 complex. During melanosome maturation, required for delivering melanogenic enzymes from recycling endosomes to nascent melanosomes by creating peripheral recycling endosomal subdomains in melanocytes. Also required for the abscission step in cytokinesis: mediates translocation of ZFYVE26, and possibly TTC19, to the midbody during cytokinesis. The protein is Kinesin-like protein KIF13A (KIF13A) of Homo sapiens (Human).